The primary structure comprises 458 residues: Fumarate hydratase class II 2 (458 aa).

Residues serine 98–threonine 100, asparagine 123–aspartate 126, serine 133–asparagine 135, and threonine 181 each bind substrate. Histidine 182 acts as the Proton donor/acceptor in catalysis. Serine 312 is a catalytic residue. Substrate-binding positions include serine 313 and lysine 318 to asparagine 320.

It belongs to the class-II fumarase/aspartase family. Fumarase subfamily. Homotetramer.

It localises to the cytoplasm. It carries out the reaction (S)-malate = fumarate + H2O. Its pathway is carbohydrate metabolism; tricarboxylic acid cycle; (S)-malate from fumarate: step 1/1. Functionally, involved in the TCA cycle. Catalyzes the stereospecific interconversion of fumarate to L-malate. The chain is Fumarate hydratase class II 2 from Pseudomonas aeruginosa (strain ATCC 15692 / DSM 22644 / CIP 104116 / JCM 14847 / LMG 12228 / 1C / PRS 101 / PAO1).